Here is a 1174-residue protein sequence, read N- to C-terminus: K(+) efflux antiporter 2, chloroplastic (1174 aa).

The transit peptide at 1-57 (MDFASSVQRQSMFHGGADFASYCLPNRMISAKLCPKGLGGTRFWDPMIDSKVRSAIR) directs the protein to the chloroplast. Topologically, residues 58–565 (SKRNVSYRSS…MFPQQEVNEE (508 aa)) are stromal. Residues 119–141 (GSDDREVTFSKEEKDTREQDSAP) are disordered. A coiled-coil region spans residues 142-350 (SLEELRDLLN…ALQRAEKTLF (209 aa)). K170 bears the N6-acetyllysine; by NSI mark. Positions 420–448 (EAEGEAEKSKNVVLTKKQEVQKDLPRESS) are enriched in basic and acidic residues. The disordered stretch occupies residues 420–457 (EAEGEAEKSKNVVLTKKQEVQKDLPRESSSHNGTKTSL). A helical membrane pass occupies residues 566–586 (EASLLDVLWLLLASVIFVPLF). The Chloroplast intermembrane portion of the chain corresponds to 587–592 (QKIPGG). The helical transmembrane segment at 593–613 (SPVLGYLAAGILIGPYGLSII) threads the bilayer. At 614-620 (RNVHGTK) the chain is on the stromal side. A helical transmembrane segment spans residues 621–641 (AIAEFGVVFLLFNIGLELSVE). Residues 642 to 648 (RLSSMKK) lie on the Chloroplast intermembrane side of the membrane. Residues 649 to 669 (YVFGLGSAQVLVTAAVIGLIT) traverse the membrane as a helical segment. At 670 to 678 (HYVAGQAGP) the chain is on the stromal side. The helical transmembrane segment at 679-699 (AAIVIGNGLALSSTAVVLQVL) threads the bilayer. At 700–713 (QERGESTSRHGRAT) the chain is on the chloroplast intermembrane side. Residues 714–734 (FSVLLFQDLAVVVLLILIPLI) form a helical membrane-spanning segment. Residues 735–746 (SPNSSKGGIGFQ) are Stromal-facing. A helical transmembrane segment spans residues 747–767 (AIAEALGLAAIKAAVAITGII). The Chloroplast intermembrane segment spans residues 768 to 807 (AGGRLLLRPIYKQIAENRNAEIFSANTLLVILGTSLLTAR). The chain crosses the membrane as a helical span at residues 808 to 828 (AGLSMALGAFLAGLLLAETEF). Over 829–841 (SLQVESDIAPYRG) the chain is Stromal. A helical membrane pass occupies residues 842–862 (LLLGLFFMTVGMSIDPKLLLA). At 863-865 (NFP) the chain is on the chloroplast intermembrane side. Residues 866–886 (LIMGTLGLLLVGKTILVVIIG) form a helical membrane-spanning segment. At 887-898 (KLFGISIISAVR) the chain is on the stromal side. The chain crosses the membrane as a helical span at residues 899–919 (VGLLLAPGGEFAFVAFGEAVN). The Chloroplast intermembrane segment spans residues 920–928 (QGIMTPQLS). The chain crosses the membrane as a helical span at residues 929-949 (SLLFLVVGISMALTPWLAAGG). At 950-1174 (QLIASRFELQ…NQIIEGTLAI (225 aa)) the chain is on the stromal side. The 118-residue stretch at 975-1092 (QGHIIICGFG…EKAGATAVVP (118 aa)) folds into the RCK N-terminal domain. Residues 1141–1174 (SLGYGFSRSTSKPKPPSPSETSDDNQIIEGTLAI) are disordered.

This sequence belongs to the monovalent cation:proton antiporter 2 (CPA2) transporter (TC 2.A.37) family. KEA (TC 2.A.37.1) subfamily. In terms of processing, acetylated at Lys-170 by the stromal acetyltransferase enzyme NSI. As to expression, detected in leaves, stems and flowers. Expressed in shoots and roots. Mainly localized to leaf veins, hypocotyls, mesophylls and guard cells. Accumulates at high levels in small and dividing plastids (at protein level).

Its subcellular location is the plastid. It is found in the chloroplast inner membrane. The protein resides in the plastid inner membrane. It catalyses the reaction K(+)(in) + H(+)(out) = K(+)(out) + H(+)(in). Its activity is regulated as follows. Repressed by sodium ions Na(+). Functionally, electroneutral K(+)/H(+) efflux antiporter modulating monovalent cation and pH homeostasis in plastids, especially during plastid division and thylakoid membrane formation. Transports K(+) and Cs(+) preferentially relative to Na(+) or Li(+). May function in osmotic adjustment. Collaboratively with KEA1, adjusts alkaline stromal pH upon light to dark transitions in plastids. Together with KEA1, critical for chloroplast development, including chloroplast RNA-metabolism (e.g. rRNA maturation, polysome loading and RNA-protein interactions) and plastid gene expression (PGE), ion homeostasis, and photosynthesis. Contributes, during early seedling development, to the regulation of photosynthesis and abscisic acid- (ABA-) mediated primary root growth in a sucrose-dependent manner. Involved in the regulation of reactive oxygen and nitrogen species (ROS and RNS) metabolism. Required in roots for rapid hyperosmotic-induced Ca(2+) responses and for osmo-sensory potentiation in hyperosmotic conditions. May counteract resilience to drought and salt stress, involving photorespiratory pathway and stomata closure. This is K(+) efflux antiporter 2, chloroplastic from Arabidopsis thaliana (Mouse-ear cress).